Reading from the N-terminus, the 133-residue chain is Secreted effector protein SteB (133 aa).

It is found in the secreted. The protein resides in the host cytoplasm. Effector proteins function to alter host cell physiology and promote bacterial survival in host tissues. The chain is Secreted effector protein SteB (steB) from Salmonella typhimurium (strain 14028s / SGSC 2262).